The sequence spans 259 residues: 2,3-dihydroxy-2,3-dihydro-p-cumate dehydrogenase (259 aa).

Position 18–42 (18–42 (VTGGAHGIGLGIVERLLGLGARVTA)) interacts with NAD(+). The active-site Proton acceptor is Tyr163.

It belongs to the short-chain dehydrogenases/reductases (SDR) family.

It carries out the reaction (2R,3S)-2,3-dihydroxy-2,3-dihydro-p-cumate + NAD(+) = 2,3-dihydroxy-p-cumate + NADH + H(+). It functions in the pathway aromatic compound metabolism; p-cumate degradation; acetaldehyde and pyruvate from p-cumate: step 2/7. The protein is 2,3-dihydroxy-2,3-dihydro-p-cumate dehydrogenase (cmtB) of Pseudomonas putida (strain ATCC 700007 / DSM 6899 / JCM 31910 / BCRC 17059 / LMG 24140 / F1).